The primary structure comprises 314 residues: DNA-directed RNA polymerase subunit alpha (314 aa).

Positions 1-228 (MIEIEKPKIE…EHLSIFVNLT (228 aa)) are alpha N-terminal domain (alpha-NTD). Positions 245–314 (KEKVLEMTIE…DLGLSLRNEN (70 aa)) are alpha C-terminal domain (alpha-CTD).

It belongs to the RNA polymerase alpha chain family. Homodimer. The RNAP catalytic core consists of 2 alpha, 1 beta, 1 beta' and 1 omega subunit. When a sigma factor is associated with the core the holoenzyme is formed, which can initiate transcription.

It carries out the reaction RNA(n) + a ribonucleoside 5'-triphosphate = RNA(n+1) + diphosphate. Functionally, DNA-dependent RNA polymerase catalyzes the transcription of DNA into RNA using the four ribonucleoside triphosphates as substrates. The chain is DNA-directed RNA polymerase subunit alpha from Listeria innocua serovar 6a (strain ATCC BAA-680 / CLIP 11262).